Reading from the N-terminus, the 425-residue chain is tRNA(Ile)-lysidine synthase (425 aa).

Residue 27–32 (SGGLDS) participates in ATP binding.

The protein belongs to the tRNA(Ile)-lysidine synthase family.

Its subcellular location is the cytoplasm. It catalyses the reaction cytidine(34) in tRNA(Ile2) + L-lysine + ATP = lysidine(34) in tRNA(Ile2) + AMP + diphosphate + H(+). In terms of biological role, ligates lysine onto the cytidine present at position 34 of the AUA codon-specific tRNA(Ile) that contains the anticodon CAU, in an ATP-dependent manner. Cytidine is converted to lysidine, thus changing the amino acid specificity of the tRNA from methionine to isoleucine. The chain is tRNA(Ile)-lysidine synthase from Streptococcus pneumoniae (strain P1031).